A 404-amino-acid polypeptide reads, in one-letter code: Subtilisin-like proteinase Mp1 (404 aa).

Positions 1–19 (MVGFKTLALHLAAVLPALA) are cleaved as a signal peptide. A propeptide spanning residues 20–112 (APVDKQATQV…VEPDQVWDLY (93 aa)) is cleaved from the precursor. Positions 33 to 111 (SYIITLKQGA…FVEPDQVWDL (79 aa)) constitute an Inhibitor I9 domain. In terms of domain architecture, Peptidase S8 spans 121 to 404 (PWGLGSISHR…NLIAFNGVTA (284 aa)). Asn-133 is a glycosylation site (N-linked (GlcNAc...) asparagine). Catalysis depends on charge relay system residues Asp-154, His-186, and Ser-347.

This sequence belongs to the peptidase S8 family.

The protein resides in the secreted. The protein is Subtilisin-like proteinase Mp1 of Magnaporthiopsis poae (Kentucky bluegrass fungus).